The primary structure comprises 400 residues: Cysteine desulfurase (400 aa).

Residues 72-73, asparagine 152, glutamine 180, and 200-202 each bind pyridoxal 5'-phosphate; these read GT and SGH. Position 203 is an N6-(pyridoxal phosphate)lysine (lysine 203). Pyridoxal 5'-phosphate is bound at residue threonine 238. Cysteine 326 functions as the Cysteine persulfide intermediate in the catalytic mechanism. Cysteine 326 provides a ligand contact to [2Fe-2S] cluster.

It belongs to the class-V pyridoxal-phosphate-dependent aminotransferase family. NifS/IscS subfamily. As to quaternary structure, homodimer. Requires pyridoxal 5'-phosphate as cofactor.

It catalyses the reaction (sulfur carrier)-H + L-cysteine = (sulfur carrier)-SH + L-alanine. Its function is as follows. Catalyzes the removal of elemental sulfur atoms from cysteine to produce alanine. Seems to participate in the biosynthesis of the nitrogenase metalloclusters by providing the inorganic sulfur required for the Fe-S core formation. This is Cysteine desulfurase from Gluconacetobacter diazotrophicus (strain ATCC 49037 / DSM 5601 / CCUG 37298 / CIP 103539 / LMG 7603 / PAl5).